The following is a 477-amino-acid chain: Alanine--glyoxylate aminotransferase 2 homolog 2, mitochondrial (477 aa).

The transit peptide at 1–22 directs the protein to the mitochondrion; sequence MQRFAAKRSVQNISVSLWRRCI. Pyridoxal 5'-phosphate is bound by residues 165-166, tyrosine 192, and 292-295; these read GT and DEVQ. N6-(pyridoxal phosphate)lysine is present on lysine 321. Threonine 350 is a binding site for pyridoxal 5'-phosphate.

The protein belongs to the class-III pyridoxal-phosphate-dependent aminotransferase family. As to quaternary structure, homotetramer. Interacts with GRF3. Pyridoxal 5'-phosphate is required as a cofactor.

It is found in the mitochondrion. The enzyme catalyses glyoxylate + L-alanine = glycine + pyruvate. The chain is Alanine--glyoxylate aminotransferase 2 homolog 2, mitochondrial (AGT3) from Arabidopsis thaliana (Mouse-ear cress).